We begin with the raw amino-acid sequence, 156 residues long: Deoxyuridine 5'-triphosphate nucleotidohydrolase (156 aa).

Substrate contacts are provided by residues 76-78 (RSG), N89, 93-95 (TVD), and K103.

Belongs to the dUTPase family. Mg(2+) is required as a cofactor.

The enzyme catalyses dUTP + H2O = dUMP + diphosphate + H(+). The protein operates within pyrimidine metabolism; dUMP biosynthesis; dUMP from dCTP (dUTP route): step 2/2. Functionally, this enzyme is involved in nucleotide metabolism: it produces dUMP, the immediate precursor of thymidine nucleotides and it decreases the intracellular concentration of dUTP so that uracil cannot be incorporated into DNA. This chain is Deoxyuridine 5'-triphosphate nucleotidohydrolase, found in Rhizobium leguminosarum bv. trifolii (strain WSM2304).